The following is a 286-amino-acid chain: Shikimate dehydrogenase (NADP(+)) (286 aa).

Shikimate-binding positions include 19–21 and Thr66; that span reads SFS. The active-site Proton acceptor is Lys70. Residues Asn91 and Asp107 each coordinate shikimate. NADP(+) is bound by residues 129–133 and Leu229; that span reads GSGGA. Tyr231 serves as a coordination point for shikimate. Residue Gly252 participates in NADP(+) binding.

Belongs to the shikimate dehydrogenase family. Homodimer.

It catalyses the reaction shikimate + NADP(+) = 3-dehydroshikimate + NADPH + H(+). The protein operates within metabolic intermediate biosynthesis; chorismate biosynthesis; chorismate from D-erythrose 4-phosphate and phosphoenolpyruvate: step 4/7. Functionally, involved in the biosynthesis of the chorismate, which leads to the biosynthesis of aromatic amino acids. Catalyzes the reversible NADPH linked reduction of 3-dehydroshikimate (DHSA) to yield shikimate (SA). The chain is Shikimate dehydrogenase (NADP(+)) from Prochlorococcus marinus (strain MIT 9301).